A 534-amino-acid polypeptide reads, in one-letter code: CTP synthase (534 aa).

The interval 1-267 (MTKYIFVTGG…GDLIIERLAL (267 aa)) is amidoligase domain. S13 provides a ligand contact to CTP. Position 13 (S13) interacts with UTP. 14 to 19 (SVGKGI) is a binding site for ATP. Y54 is a binding site for L-glutamine. D71 lines the ATP pocket. Mg(2+) is bound by residues D71 and E141. CTP contacts are provided by residues 148–150 (DIE), 188–193 (KTKPTQ), and K224. Residues 188-193 (KTKPTQ) and K224 contribute to the UTP site. Positions 292–534 (TVAIVGKYVE…VQAALEQIAE (243 aa)) constitute a Glutamine amidotransferase type-1 domain. L-glutamine is bound at residue G354. The active-site Nucleophile; for glutamine hydrolysis is C381. L-glutamine is bound by residues 382–385 (LGMQ), E405, and R462. Catalysis depends on residues H507 and E509.

This sequence belongs to the CTP synthase family. In terms of assembly, homotetramer.

It carries out the reaction UTP + L-glutamine + ATP + H2O = CTP + L-glutamate + ADP + phosphate + 2 H(+). It catalyses the reaction L-glutamine + H2O = L-glutamate + NH4(+). The enzyme catalyses UTP + NH4(+) + ATP = CTP + ADP + phosphate + 2 H(+). Its pathway is pyrimidine metabolism; CTP biosynthesis via de novo pathway; CTP from UDP: step 2/2. With respect to regulation, allosterically activated by GTP, when glutamine is the substrate; GTP has no effect on the reaction when ammonia is the substrate. The allosteric effector GTP functions by stabilizing the protein conformation that binds the tetrahedral intermediate(s) formed during glutamine hydrolysis. Inhibited by the product CTP, via allosteric rather than competitive inhibition. In terms of biological role, catalyzes the ATP-dependent amination of UTP to CTP with either L-glutamine or ammonia as the source of nitrogen. Regulates intracellular CTP levels through interactions with the four ribonucleotide triphosphates. The polypeptide is CTP synthase (Herpetosiphon aurantiacus (strain ATCC 23779 / DSM 785 / 114-95)).